Consider the following 356-residue polypeptide: Nicotinate-nucleotide--dimethylbenzimidazole phosphoribosyltransferase (356 aa).

The active-site Proton acceptor is the Glu-317.

Belongs to the CobT family. Homodimer.

It carries out the reaction 5,6-dimethylbenzimidazole + nicotinate beta-D-ribonucleotide = alpha-ribazole 5'-phosphate + nicotinate + H(+). It participates in nucleoside biosynthesis; alpha-ribazole biosynthesis; alpha-ribazole from 5,6-dimethylbenzimidazole: step 1/2. Catalyzes the synthesis of alpha-ribazole-5'-phosphate from nicotinate mononucleotide (NAMN) and 5,6-dimethylbenzimidazole (DMB). The polypeptide is Nicotinate-nucleotide--dimethylbenzimidazole phosphoribosyltransferase (Salmonella dublin (strain CT_02021853)).